A 1077-amino-acid chain; its full sequence is Protein hairless (1077 aa).

Disordered regions lie at residues 14 to 75 (NRQT…SNNN), 97 to 141 (SSTS…HAKT), 269 to 322 (PSAA…SRPR), 340 to 368 (TLGR…DQQP), 408 to 504 (IEKP…PKAK), 533 to 876 (TTTS…PTSN), and 976 to 1077 (GQPA…LSKH). Low complexity-rich tracts occupy residues 26-75 (NINS…SNNN), 115-130 (TTTP…SSST), 269-286 (PSAA…VTTA), and 293-308 (STSL…IQSS). Basic and acidic residues-rich tracts occupy residues 408-439 (IEKP…ESKE) and 449-459 (QPKDETVDVEM). Residues 596–607 (GSGGASSGGAGG) are compositionally biased toward gly residues. Residues 640 to 684 (PGSSSSSTSPATLSTQPTRLNSSYSIHSLLGGSSGSGSSSFSSSG) show a composition bias toward low complexity. A compositionally biased stretch (polar residues) spans 704-713 (SMYQPSSSSY). 4 positions are modified to phosphoserine: S720, S723, S746, and S753. The span at 772–782 (PSTSGSASQDL) shows a compositional bias: polar residues. Composition is skewed to low complexity over residues 783–798 (SPPR…TPRT) and 811–829 (ASPS…RSAS). A compositionally biased stretch (polar residues) spans 837–846 (QQQPHLQRSS). Positions 865–876 (AGSPTSAPPTSN) are enriched in low complexity. The segment covering 984-995 (THPHLAHPHQHP) has biased composition (basic residues). 2 stretches are compositionally biased toward low complexity: residues 996–1012 (HPAA…LATP) and 1023–1055 (SATS…SSSA). Residues 1056–1070 (MFHTSSLRNEQSSDL) are compositionally biased toward polar residues.

As to expression, during embryogenesis expression is primarily in endo- and mesodermal cell layers. Ovary, embryos, larval and pupal imaginal disks.

The protein resides in the nucleus. In terms of biological role, is a potent antagonist of neurogenic gene activity during sensory organ development. The expression of distinct cell fates by the trichogen (shaft) / tormogen (socket) sister cell pair depends on the level of H activity. A certain threshold level of H activity is required, below which both sister cells adopt the tormogen fate. The protein is Protein hairless (H) of Drosophila melanogaster (Fruit fly).